Consider the following 508-residue polypeptide: Maturase K (508 aa).

This sequence belongs to the intron maturase 2 family. MatK subfamily.

The protein localises to the plastid. Its subcellular location is the chloroplast. Functionally, usually encoded in the trnK tRNA gene intron. Probably assists in splicing its own and other chloroplast group II introns. The polypeptide is Maturase K (Huidobria chilensis (Loasa chilensis)).